Consider the following 390-residue polypeptide: Uroporphyrinogen decarboxylase 2, chloroplastic (390 aa).

The N-terminal 30 residues, 1–30 (MATACPPLSLQPAYLSGRSARARRPPPAVR), are a transit peptide targeting the chloroplast. Substrate is bound by residues 70 to 74 (RQAGR), Phe-89, Ser-119, Asp-120, Tyr-197, Ser-252, and His-367.

The protein belongs to the uroporphyrinogen decarboxylase family. In terms of assembly, homodimer.

The protein localises to the plastid. The protein resides in the chloroplast. The enzyme catalyses uroporphyrinogen III + 4 H(+) = coproporphyrinogen III + 4 CO2. It participates in porphyrin-containing compound metabolism; protoporphyrin-IX biosynthesis; coproporphyrinogen-III from 5-aminolevulinate: step 4/4. In terms of biological role, catalyzes the decarboxylation of four acetate groups of uroporphyrinogen-III to yield coproporphyrinogen-III. The protein is Uroporphyrinogen decarboxylase 2, chloroplastic of Oryza sativa subsp. japonica (Rice).